The following is a 306-amino-acid chain: Apolipoprotein E (306 aa).

A signal peptide spans 1-18 (MKVLWAVLVVTLLAGCQA). Repeat copies occupy residues 81–102 (VLMEDTMKEVKAYKSELEQELG), 103–124 (PMAEDTKARLSKELQAAQARLG), 125–146 (ADMEEVRNRLTQYRSEVQTMLG), 147–168 (QSAEELRARLASHLRKLRKRLL), 169–190 (RDAEDLQKRLAVYKAGAQEGAE), 191–212 (RGVSAIRERLGSLVEQGRLRAA), 213–230 (QTSQPLRERAQAWGERLR), and 231–252 (GRLEEVGGQARDRLDVVREQME). Residues 81–252 (VLMEDTMKEV…RLDVVREQME (172 aa)) form an 8 X 22 AA approximate tandem repeats region. The residue at position 144 (methionine 144) is a Methionine sulfoxide. Position 148 is a phosphoserine (serine 148). The tract at residues 159–169 (HLRKLRKRLLR) is LDL and other lipoprotein receptors binding. 163 to 166 (LRKR) lines the heparin pocket. The segment at 211–280 (AAQTSQPLRE…GWFEPVVEDM (70 aa)) is lipid-binding and lipoprotein association. Heparin is bound at residue 226–233 (GERLRGRL). A specificity for association with VLDL region spans residues 268–280 (RLKGWFEPVVEDM).

Belongs to the apolipoprotein A1/A4/E family. As to quaternary structure, homotetramer. May interact with ABCA1; functionally associated with ABCA1 in the biogenesis of HDLs. May interact with APP/A4 amyloid-beta peptide; the interaction is extremely stable in vitro but its physiological significance is unclear. May interact with MAPT. May interact with MAP2. In the cerebrospinal fluid, interacts with secreted SORL1. Interacts with PMEL; this allows the loading of PMEL luminal fragment on ILVs to induce fibril nucleation. Post-translationally, APOE exists as multiple glycosylated and sialylated glycoforms within cells and in plasma. The extent of glycosylation and sialylation are tissue and context specific. In terms of processing, glycated in plasma VLDL. Phosphorylated by FAM20C in the extracellular medium.

The protein resides in the secreted. The protein localises to the extracellular space. Its subcellular location is the extracellular matrix. It is found in the extracellular vesicle. It localises to the endosome. The protein resides in the multivesicular body. Functionally, APOE is an apolipoprotein, a protein associating with lipid particles, that mainly functions in lipoprotein-mediated lipid transport between organs via the plasma and interstitial fluids. APOE is a core component of plasma lipoproteins and is involved in their production, conversion and clearance. Apolipoproteins are amphipathic molecules that interact both with lipids of the lipoprotein particle core and the aqueous environment of the plasma. As such, APOE associates with chylomicrons, chylomicron remnants, very low density lipoproteins (VLDL) and intermediate density lipoproteins (IDL) but shows a preferential binding to high-density lipoproteins (HDL). It also binds a wide range of cellular receptors including the LDL receptor/LDLR, the LDL receptor-related proteins LRP1, LRP2 and LRP8 and the very low-density lipoprotein receptor/VLDLR that mediate the cellular uptake of the APOE-containing lipoprotein particles. Finally, APOE also has a heparin-binding activity and binds heparan-sulfate proteoglycans on the surface of cells, a property that supports the capture and the receptor-mediated uptake of APOE-containing lipoproteins by cells. A main function of APOE is to mediate lipoprotein clearance through the uptake of chylomicrons, VLDLs, and HDLs by hepatocytes. APOE is also involved in the biosynthesis by the liver of VLDLs as well as their uptake by peripheral tissues ensuring the delivery of triglycerides and energy storage in muscle, heart and adipose tissues. By participating in the lipoprotein-mediated distribution of lipids among tissues, APOE plays a critical role in plasma and tissues lipid homeostasis. APOE is also involved in two steps of reverse cholesterol transport, the HDLs-mediated transport of cholesterol from peripheral tissues to the liver, and thereby plays an important role in cholesterol homeostasis. First, it is functionally associated with ABCA1 in the biogenesis of HDLs in tissues. Second, it is enriched in circulating HDLs and mediates their uptake by hepatocytes. APOE also plays an important role in lipid transport in the central nervous system, regulating neuron survival and sprouting. This Hystrix brachyura (Malayan porcupine) protein is Apolipoprotein E (APOE).